Reading from the N-terminus, the 458-residue chain is Ammonium transporter Rh type B (458 aa).

The Cytoplasmic portion of the chain corresponds to methionine 1–leucine 13. Residues glutamine 14 to valine 34 traverse the membrane as a helical segment. Residues arginine 35–tyrosine 61 lie on the Extracellular side of the membrane. Asparagine 49 is a glycosylation site (N-linked (GlcNAc...) asparagine). The helical transmembrane segment at proline 62–leucine 82 threads the bilayer. Residues glutamine 83–glycine 86 are Cytoplasmic-facing. A helical membrane pass occupies residues phenylalanine 87–valine 107. Residues glutamine 108 to glutamate 124 are Extracellular-facing. Residues serine 125–glycine 145 form a helical membrane-spanning segment. Topologically, residues lysine 146–proline 149 are cytoplasmic. A helical transmembrane segment spans residues alanine 150–leucine 170. Residues leucine 171–aspartate 178 are Extracellular-facing. The helical transmembrane segment at alanine 179–tyrosine 201 threads the bilayer. Residues arginine 202–aspartate 219 lie on the Cytoplasmic side of the membrane. A helical membrane pass occupies residues leucine 220–proline 240. Residues threonine 241–alanine 251 lie on the Extracellular side of the membrane. Residues leucine 252 to valine 272 traverse the membrane as a helical segment. At glycine 273–histidine 282 the chain is on the cytoplasmic side. The chain crosses the membrane as a helical span at residues valine 283–threonine 303. Residue proline 304 is a topological domain, extracellular. Residues phenylalanine 305–phenylalanine 325 form a helical membrane-spanning segment. Topologically, residues threonine 326–glycine 346 are cytoplasmic. The helical transmembrane segment at methionine 347 to serine 367 threads the bilayer. The Extracellular portion of the chain corresponds to tyrosine 368–glutamine 393. The helical transmembrane segment at leucine 394–leucine 414 threads the bilayer. Over leucine 415 to alanine 458 the chain is Cytoplasmic. An interaction with ANK3 region spans residues arginine 416 to proline 424. The Basolateral sorting signal signature appears at tyrosine 429–glutamine 432.

This sequence belongs to the ammonium transporter (TC 2.A.49) family. Rh subfamily. As to quaternary structure, interacts (via C-terminus) with ANK2 and ANK3; required for targeting to the basolateral membrane. N-glycosylated.

The protein resides in the cell membrane. It localises to the basolateral cell membrane. The catalysed reaction is NH4(+)(in) = NH4(+)(out). The enzyme catalyses methylamine(out) = methylamine(in). It carries out the reaction CO2(out) = CO2(in). Ammonium transporter involved in the maintenance of acid-base homeostasis. Transports ammonium and its related derivative methylammonium across the basolateral plasma membrane of epithelial cells likely contributing to renal transepithelial ammonia transport and ammonia metabolism. May transport either NH4(+) or NH3 ammonia species predominantly mediating an electrogenic NH4(+) transport. May act as a CO2 channel providing for renal acid secretion. This Sus scrofa (Pig) protein is Ammonium transporter Rh type B (RHBG).